The primary structure comprises 159 residues: Voltage-dependent N-type calcium channel subunit alpha-1B (159 aa).

Residues 1–5 (LVTEI) form a helical membrane-spanning segment. An IV repeat occupies 1–159 (LVTEIADTDN…LMLNLFVAVI (159 aa)). Topologically, residues 6 to 13 (ADTDNFIN) are extracellular. A glycan (N-linked (GlcNAc...) asparagine) is linked at Asn13. The helical transmembrane segment at 14 to 32 (LSFLRLFRAARLIKLLRQG) threads the bilayer. The Cytoplasmic segment spans residues 33–51 (YTIRILLWTFVQSFKALPY). A helical transmembrane segment spans residues 52–71 (VCLLIAMLFFIYAIIGMQVF). Over 72-135 (GNIALNDETS…LTKNECGSDF (64 aa)) the chain is Extracellular. Residues 136–155 (AYFYFVSFIFLCSFLMLNLF) traverse the membrane as a helical segment. Residues 156 to 159 (VAVI) lie on the Cytoplasmic side of the membrane.

The protein belongs to the calcium channel alpha-1 subunit (TC 1.A.1.11) family. CACNA1B subfamily. In terms of assembly, multisubunit complex consisting of alpha-1, alpha-2, beta and delta subunits in a 1:1:1:1 ratio. The channel activity is directed by the pore-forming and voltage-sensitive alpha-1 subunit. In many cases, this subunit is sufficient to generate voltage-sensitive calcium channel activity. The auxiliary subunits beta and alpha-2/delta linked by a disulfide bridge regulate the channel activity. Interacts with RIMBP2. Phosphorylated in vitro by CaM-kinase II, PKA, PKC and CGPK.

Its subcellular location is the membrane. It catalyses the reaction Ca(2+)(in) = Ca(2+)(out). Its function is as follows. Voltage-sensitive calcium channels (VSCC) mediate the entry of calcium ions into excitable cells and are also involved in a variety of calcium-dependent processes, including muscle contraction, hormone or neurotransmitter release, gene expression, cell motility, cell division and cell death. This alpha-1B subunit gives rise to N-type calcium currents. N-type calcium channels belong to the 'high-voltage activated' (HVA) group. They are involved in pain signaling. Calcium channels containing alpha-1B subunit may play a role in directed migration of immature neurons. Mediates Ca(2+) release probability at hippocampal neuronal soma and synaptic terminals. The sequence is that of Voltage-dependent N-type calcium channel subunit alpha-1B (CACNA1B) from Gallus gallus (Chicken).